The following is a 214-amino-acid chain: RNA pyrophosphohydrolase (214 aa).

Positions 6–149 (GFRPNVGIIL…KRDVYQLALT (144 aa)) constitute a Nudix hydrolase domain. The short motif at 38 to 59 (GGIKYGETPMQAMYRELHEETG) is the Nudix box element.

Belongs to the Nudix hydrolase family. RppH subfamily. The cofactor is a divalent metal cation.

Functionally, accelerates the degradation of transcripts by removing pyrophosphate from the 5'-end of triphosphorylated RNA, leading to a more labile monophosphorylated state that can stimulate subsequent ribonuclease cleavage. In Burkholderia cenocepacia (strain ATCC BAA-245 / DSM 16553 / LMG 16656 / NCTC 13227 / J2315 / CF5610) (Burkholderia cepacia (strain J2315)), this protein is RNA pyrophosphohydrolase.